A 634-amino-acid chain; its full sequence is MSLVPATNYIYTPLNQLKGGTIVNVYGVVKFFKPPYLSKGTDYCSVVTIVDQTNVKLTCLLFSGNYEALPIIYKNGDIVRFHRLKIQVYKKETQGITSSGFASLTFEGTLGAPIIPRTSSKYFNFTTEDHKMVETLRVWASTHMSPSWTLLKLCDVQPMQYFDLTCQLLGKAEVDGASFLLKVWDGTRTPFPSWRVLIQDLVLEGDLSHIHRLQNLTIDILVYDNHVHVARSLKVGSFLRIYSLHTKLQSMNSENQTMLSLEFHLHGGTSYGRGIRVLPETNSDVDQLKKDLESANLTANHHSDVICQSEPDDSFPSSGSVSLYEVERCQQLSATILTDHQYLERTPLCAILKQKAPQQYRIRAKLRSYKPRRLFQSVKLHCPKCHLLQEVPREGDLDIILQDGATKTPDVKLQNTALYDSKIWTTKNQKGRKVAVHFVKNNGILPLSNECLLLIEGGTLSEICKLSNKFNSVIPVRSGHEDLELLDLSAPFLIQGTIHHYGCKQCSSLRSIQNLNSLVDKTSWIPSSVAEVLGIVPLQYVFVMTFTLDDGTGVLEAYLMDSDKFFQIPASEVLMDDDLQKSMDMIMDMFCPPGIKIDAYPWLECFIKSYNVTNGTDNQICYQIFDTTVAEDVI.

It belongs to the telombin family. As to quaternary structure, homodimer or homooligomer. Component of the shelterin complex (telosome) composed of TERF1, TERF2, TINF2, TERF2IP, ACD and POT1. Binds single-stranded telomeric DNA as a monomer. Associated component of the telomerase holoenzyme complex. Found in a complex with TERF1, TINF2 and TNKS1. Interacts with TNKS1. Forms heterodimers with ACD. Identified in a complex with ACD and single-stranded telomeric DNA.

It localises to the nucleus. It is found in the chromosome. The protein resides in the telomere. In terms of biological role, component of the telomerase ribonucleoprotein (RNP) complex that is essential for the replication of chromosome termini. Is a component of the double-stranded telomeric DNA-binding TRF1 complex which is involved in the regulation of telomere length by cis-inhibition of telomerase. Also acts as a single-stranded telomeric DNA-binding protein and thus may act as a downstream effector of the TRF1 complex and may transduce information about telomere maintenance and/or length to the telomere terminus. Component of the shelterin complex (telosome) that is involved in the regulation of telomere length and protection. Shelterin associates with arrays of double-stranded TTAGGG repeats added by telomerase and protects chromosome ends; without its protective activity, telomeres are no longer hidden from the DNA damage surveillance and chromosome ends are inappropriately processed by DNA repair pathways. Binds to two or more telomeric single-stranded 5'-TTAGGG-3' repeats (G-strand) and with high specificity to a minimal telomeric single-stranded 5'-TAGGGTTAG-3' sequence. Binds telomeric single-stranded sequences internally or at proximity of a 3'-end. Its activity is TERT dependent but it does not increase TERT activity by itself. In contrast, the ACD-POT1 heterodimer enhances telomere elongation by increasing telomerase processivity. The protein is Protection of telomeres protein 1 (POT1) of Macaca fascicularis (Crab-eating macaque).